We begin with the raw amino-acid sequence, 66 residues long: Cold shock protein CspD (66 aa).

The 60-residue stretch at 4-63 (GKVKWFNNEKGFGFIEVEGGDDVFVHFTAIEGDGYKSLEEGQEVSFEIVEGNRGPQASNV) folds into the CSD domain.

Its subcellular location is the cytoplasm. This is Cold shock protein CspD (cspD) from Bacillus subtilis (strain 168).